A 389-amino-acid polypeptide reads, in one-letter code: NADH-quinone oxidoreductase subunit D (389 aa).

This sequence belongs to the complex I 49 kDa subunit family. NDH-1 is composed of 14 different subunits. Subunits NuoB, C, D, E, F, and G constitute the peripheral sector of the complex.

It is found in the cell inner membrane. The catalysed reaction is a quinone + NADH + 5 H(+)(in) = a quinol + NAD(+) + 4 H(+)(out). NDH-1 shuttles electrons from NADH, via FMN and iron-sulfur (Fe-S) centers, to quinones in the respiratory chain. The immediate electron acceptor for the enzyme in this species is believed to be ubiquinone. Couples the redox reaction to proton translocation (for every two electrons transferred, four hydrogen ions are translocated across the cytoplasmic membrane), and thus conserves the redox energy in a proton gradient. The sequence is that of NADH-quinone oxidoreductase subunit D from Citrifermentans bemidjiense (strain ATCC BAA-1014 / DSM 16622 / JCM 12645 / Bem) (Geobacter bemidjiensis).